The following is a 687-amino-acid chain: Polyphosphate kinase (687 aa).

Residue Asn45 participates in ATP binding. Mg(2+) is bound by residues Arg375 and Arg405. The active-site Phosphohistidine intermediate is His435. Residues Tyr472, Arg568, and His596 each coordinate ATP.

The protein belongs to the polyphosphate kinase 1 (PPK1) family. The cofactor is Mg(2+). Post-translationally, an intermediate of this reaction is the autophosphorylated ppk in which a phosphate is covalently linked to a histidine residue through a N-P bond.

The enzyme catalyses [phosphate](n) + ATP = [phosphate](n+1) + ADP. Functionally, catalyzes the reversible transfer of the terminal phosphate of ATP to form a long-chain polyphosphate (polyP). The protein is Polyphosphate kinase of Burkholderia multivorans (strain ATCC 17616 / 249).